The primary structure comprises 404 residues: Keratin, type I cuticular Ha3-I (404 aa).

A head region spans residues methionine 1 to glutamate 56. The IF rod domain occupies glutamate 56–leucine 367. The interval lysine 57 to arginine 91 is coil 1A. A linker 1 region spans residues serine 92–serine 102. Positions tyrosine 103 to cysteine 203 are coil 1B. The interval glutamine 204–valine 219 is linker 12. A coil 2 region spans residues aspartate 220 to glutamate 363. The segment at aspartate 364–tyrosine 404 is tail.

It belongs to the intermediate filament family. In terms of tissue distribution, expressed in the hair follicles.

The protein is Keratin, type I cuticular Ha3-I (KRT33A) of Homo sapiens (Human).